Reading from the N-terminus, the 176-residue chain is Ribosome rescue factor SmrB (176 aa).

The Smr domain maps to 97–172 (LDMHGMTQQE…GDGALLVLLS (76 aa)).

This sequence belongs to the SmrB family. As to quaternary structure, associates with collided ribosomes, but not with correctly translating polysomes.

In terms of biological role, acts as a ribosome collision sensor. Detects stalled/collided disomes (pairs of ribosomes where the leading ribosome is stalled and a second ribosome has collided with it) and endonucleolytically cleaves mRNA at the 5' boundary of the stalled ribosome. Stalled/collided disomes form a new interface (primarily via the 30S subunits) that binds SmrB. Cleaved mRNA becomes available for tmRNA ligation, leading to ribosomal subunit dissociation and rescue of stalled ribosomes. The polypeptide is Ribosome rescue factor SmrB (Vibrio campbellii (strain ATCC BAA-1116)).